The sequence spans 89 residues: Small ribosomal subunit protein uS19 (89 aa).

Belongs to the universal ribosomal protein uS19 family.

Protein S19 forms a complex with S13 that binds strongly to the 16S ribosomal RNA. This is Small ribosomal subunit protein uS19 from Bacteroides fragilis (strain YCH46).